Consider the following 166-residue polypeptide: Endoribonuclease YbeY (166 aa).

3 residues coordinate Zn(2+): His111, His115, and His121. Residues 141-166 form a disordered region; sequence LGYPDPYAEDESADHPHSDTPSKDHE. The segment covering 153–166 has biased composition (basic and acidic residues); the sequence is ADHPHSDTPSKDHE.

It belongs to the endoribonuclease YbeY family. Requires Zn(2+) as cofactor.

It is found in the cytoplasm. Its function is as follows. Single strand-specific metallo-endoribonuclease involved in late-stage 70S ribosome quality control and in maturation of the 3' terminus of the 16S rRNA. The chain is Endoribonuclease YbeY from Pseudomonas savastanoi pv. phaseolicola (strain 1448A / Race 6) (Pseudomonas syringae pv. phaseolicola (strain 1448A / Race 6)).